Reading from the N-terminus, the 427-residue chain is Serine/arginine (SR)-type shuttling mRNA binding protein GBP2 (427 aa).

The tract at residues 1–101 (MERELGMYGN…GRGGGRGRTL (101 aa)) is disordered. The span at 22 to 32 (RLSDDRDRYDD) shows a compositional bias: basic and acidic residues. Ser-24 is subject to Phosphoserine. Over residues 35-44 (DSSSNNGNGS) the composition is skewed to low complexity. Residues 50–60 (DRGSRFNDRYD) are compositionally biased toward basic and acidic residues. RRM domains lie at 122–198 (NSIF…QDNP) and 219–296 (FEVF…EGRF). Thr-130 is modified (phosphothreonine). Positions 300 to 317 (KNNDRYNQRREDLEDTRG) are enriched in basic and acidic residues. Positions 300–319 (KNNDRYNQRREDLEDTRGTE) are disordered. One can recognise an RRM 3 domain in the interval 349-426 (CFIYCSNLPF…CSLQISYARR (78 aa)).

Methylated by HMT1.

The protein resides in the cytoplasm. Its subcellular location is the nucleus. The protein localises to the chromosome. It localises to the telomere. It is found in the P-body. The protein resides in the stress granule. Its function is as follows. Binds to intron-containing transcripts and is involved in quality control for the export of spliced mRNAs from the nucleus. Binds to pre-mRNAs until splicing is completed or until faulty mRNAs are degraded. On correctly spliced mRNAs, GBP2 and HRB1 recruit MEX67 to allow nuclear export. On faulty mRNAs, GBP2 and HRB1 associate with the TRAMP complex that guides those pre-mRNAs to the exosome for degradation. Binds single-stranded telomeric sequences of the type (TG[1-3])n in vitro. Influences the localization of RAP1 in the nuclei. Involved in modulating telomere length. The polypeptide is Serine/arginine (SR)-type shuttling mRNA binding protein GBP2 (Saccharomyces cerevisiae (strain ATCC 204508 / S288c) (Baker's yeast)).